A 279-amino-acid chain; its full sequence is Tryptophan synthase alpha chain (279 aa).

Active-site proton acceptor residues include glutamate 50 and aspartate 61.

This sequence belongs to the TrpA family. As to quaternary structure, tetramer of two alpha and two beta chains.

It catalyses the reaction (1S,2R)-1-C-(indol-3-yl)glycerol 3-phosphate + L-serine = D-glyceraldehyde 3-phosphate + L-tryptophan + H2O. Its pathway is amino-acid biosynthesis; L-tryptophan biosynthesis; L-tryptophan from chorismate: step 5/5. In terms of biological role, the alpha subunit is responsible for the aldol cleavage of indoleglycerol phosphate to indole and glyceraldehyde 3-phosphate. In Rhizobium johnstonii (strain DSM 114642 / LMG 32736 / 3841) (Rhizobium leguminosarum bv. viciae), this protein is Tryptophan synthase alpha chain.